A 1253-amino-acid chain; its full sequence is Latent-transforming growth factor beta-binding protein 3 (1253 aa).

An N-terminal signal peptide occupies residues 1–38 (MPGPRGAAHGLAPAMRQAGALGLLALLLLALLGPGGGA). Residue N86 is glycosylated (N-linked (GlcNAc...) asparagine). Residues 106–138 (RVVVCPLPCMNGGQCSSRNQCLCPPDFTGRFCQ) enclose the EGF-like 1 domain. 3 disulfide bridges follow: C110/C120, C114/C126, and C128/C137. The disordered stretch occupies residues 244–270 (GPNAEGPASSQHLLPHPKPQHPRPPTQ). Residues 274–328 (GRCFQDTLPKQPCGSNPLPGLTKQEDCCGSIGTAWGQSKCHKCPQLQYTGVQKPG) enclose the TB 1 domain. Cystine bridges form between C276–C300, C286–C313, and C301–C316. N-linked (GlcNAc...) asparagine glycosylation occurs at N346. The region spanning 352 to 392 (DINECAMPGMCRHGDCLNNPGSYRCVCPPGHSLGPSRTQCI) is the EGF-like 2; calcium-binding domain. 7 disulfide bridges follow: C356/C367, C362/C376, C378/C391, C402/C425, C412/C437, C426/C440, and C427/C452. The TB 2 domain occupies 400–452 (SLCFRLVSTEHQCQHPLTTRLTRQLCCCSVGKAWGARCQRCPADGTAAFKEIC). The tract at residues 475–555 (FSLFLHPDGP…PTFHRFLPDL (81 aa)) is disordered. The 42-residue stretch at 571–612 (ETDECRLNQNICGHGQCVPGPSDYSCHCNAGYRSHPQHRYCV) folds into the EGF-like 3 domain. Disulfide bonds link C575-C587, C582-C596, C598-C611, C617-C629, C622-C638, C661-C673, C667-C682, C684-C698, C745-C756, C751-C765, C767-C780, C786-C797, C792-C806, C808-C821, C827-C838, C833-C847, C849-C861, C867-C880, C874-C889, C891-C904, C916-C939, C926-C951, C940-C956, C941-C968, C994-C1007, C1002-C1016, C1018-C1031, C1037-C1048, C1043-C1057, C1059-C1072, C1113-C1127, and C1114-C1136. One can recognise an EGF-like 4; calcium-binding domain in the interval 613–656 (DVNECEAEPCGPGKGICMNTGGSYNCHCNRGYRLHVGAGGRSCV). One can recognise an EGF-like 5; calcium-binding domain in the interval 657-699 (DLNECTKPHLCGDGGFCINFPGHYKCNCYPGYRLKASRPPICE). The EGF-like 6; calcium-binding domain occupies 741–781 (DVNECSEGTPCSPGWCENLPGSYRCTCAQGYEPAQDGLSCI). The region spanning 782 to 822 (DVDECEAGKVCQDGICTNTPGSFQCQCLSGYHLSRDRSRCE) is the EGF-like 7; calcium-binding domain. The 39-residue stretch at 823 to 861 (DIDECDFPAACIGGDCINTNGSYRCLCPQGHRLVGGRKC) folds into the EGF-like 8; calcium-binding domain. N842 carries N-linked (GlcNAc...) asparagine glycosylation. The region spanning 863 to 905 (DIDECSQDPGLCLPHGACENLQGSYVCVCDEGFTLTQDQHGCE) is the EGF-like 9; calcium-binding domain. The TB 3 domain occupies 914–968 (KECYLNFDDTVFCDSVLATNVTQQECCCSLGAGWGDHCEIYPCPVYSSAEFHSLC). N-linked (GlcNAc...) asparagine glycosylation is present at N933. Residues 990–1032 (DIDECILFGAEICKEGKCVNTQPGYECYCKQGFYYDGNLLECV) form the EGF-like 10; calcium-binding domain. The EGF-like 11; calcium-binding domain maps to 1033-1072 (DVDECLDESNCRNGVCENTRGGYRCACTPPAEYSPAQRQC). Residues 1086 to 1136 (EVCWGQRGEDGMCMGPLAGPALTFDDCCCRQGRGWGTQCRPCPPRGTGSQC) enclose the TB 4 domain. Over residues 1138 to 1148 (TSQSESNSFWD) the composition is skewed to polar residues. A disordered region spans residues 1138-1169 (TSQSESNSFWDTSPLLLGKSPRDEDSSEEDSD). Residues 1204 to 1231 (DIDECRELNQRGLLCKSERCVNTSGSFR) enclose the EGF-like 12; calcium-binding domain. Intrachain disulfides connect C1208-C1223 and C1218-C1232. Residue N1225 is glycosylated (N-linked (GlcNAc...) asparagine).

The protein belongs to the LTBP family. As to quaternary structure, forms part of the large latent transforming growth factor beta (TGFB1) precursor complex; removal is essential for activation of complex. Interacts with EFEMP2. Contains hydroxylated asparagine residues. In terms of processing, two intrachain disulfide bonds from the TB3 domain are rearranged upon TGFB1 binding, and form interchain bonds with TGFB1 propeptide, anchoring it to the extracellular matrix.

It localises to the secreted. The protein resides in the extracellular space. Its subcellular location is the extracellular matrix. Functionally, key regulator of transforming growth factor beta (TGFB1, TGFB2 and TGFB3) that controls TGF-beta activation by maintaining it in a latent state during storage in extracellular space. Associates specifically via disulfide bonds with the Latency-associated peptide (LAP), which is the regulatory chain of TGF-beta, and regulates integrin-dependent activation of TGF-beta. This is Latent-transforming growth factor beta-binding protein 3 (Ltbp3) from Mus musculus (Mouse).